A 365-amino-acid chain; its full sequence is MMDKGAPRGTRTGFTTGACSAAAARAAVIGLVTGQVPDHVECLLPNGDLVRFAVHDGRVDSASAHAMVIKDAGDDPDCTDKAHLTADVRLLPDLAGQVVLAGGTGVGTVTMPGLGLAVGGPAINPVPRRNIEANVRAVGAALLDEVGLEVAISVPQGEEMAKKTLNARLGILGGISILGTTGIVKPYSTAAYRASVVQGVQVAGTLGHGVVVLTTGGRTEKFVMAEMPELPEPAFVQMGDFLRYAMGAAVKAGIRKVVIGGMVGKLTKIAQGETITHAGRAEVDTGLLADLAAGLGAPPDVCDAIRGNETARYAGERMDALGLGTAFHTALAQRVIQTLRTRYPDQFELKVLVCDFEGRKIAEAP.

The protein belongs to the CbiD family.

The enzyme catalyses Co-precorrin-5B + S-adenosyl-L-methionine = Co-precorrin-6A + S-adenosyl-L-homocysteine. The protein operates within cofactor biosynthesis; adenosylcobalamin biosynthesis; cob(II)yrinate a,c-diamide from sirohydrochlorin (anaerobic route): step 6/10. In terms of biological role, catalyzes the methylation of C-1 in cobalt-precorrin-5B to form cobalt-precorrin-6A. In Variovorax paradoxus (strain S110), this protein is Cobalt-precorrin-5B C(1)-methyltransferase.